The chain runs to 223 residues: Phosphoribosylformylglycinamidine synthase subunit PurQ (223 aa).

The Glutamine amidotransferase type-1 domain occupies 3 to 223 (SAVILLPGLN…LFAGALGITA (221 aa)). Residue cysteine 87 is the Nucleophile of the active site. Active-site residues include histidine 197 and glutamate 199.

As to quaternary structure, part of the FGAM synthase complex composed of 1 PurL, 1 PurQ and 2 PurS subunits.

The protein resides in the cytoplasm. The catalysed reaction is N(2)-formyl-N(1)-(5-phospho-beta-D-ribosyl)glycinamide + L-glutamine + ATP + H2O = 2-formamido-N(1)-(5-O-phospho-beta-D-ribosyl)acetamidine + L-glutamate + ADP + phosphate + H(+). The enzyme catalyses L-glutamine + H2O = L-glutamate + NH4(+). Its pathway is purine metabolism; IMP biosynthesis via de novo pathway; 5-amino-1-(5-phospho-D-ribosyl)imidazole from N(2)-formyl-N(1)-(5-phospho-D-ribosyl)glycinamide: step 1/2. In terms of biological role, part of the phosphoribosylformylglycinamidine synthase complex involved in the purines biosynthetic pathway. Catalyzes the ATP-dependent conversion of formylglycinamide ribonucleotide (FGAR) and glutamine to yield formylglycinamidine ribonucleotide (FGAM) and glutamate. The FGAM synthase complex is composed of three subunits. PurQ produces an ammonia molecule by converting glutamine to glutamate. PurL transfers the ammonia molecule to FGAR to form FGAM in an ATP-dependent manner. PurS interacts with PurQ and PurL and is thought to assist in the transfer of the ammonia molecule from PurQ to PurL. The protein is Phosphoribosylformylglycinamidine synthase subunit PurQ of Brucella abortus biovar 1 (strain 9-941).